The primary structure comprises 418 residues: MAP kinase-interacting serine/threonine-protein kinase 1 (418 aa).

The segment at 1–23 (MVSSQPVPFDDGGKRRKKKRKTR) is disordered. The Protein kinase domain occupies 37–321 (RLTDELLGEG…AFQVLQHPWL (285 aa)). ATP-binding positions include 43–51 (LGEGAYAKV) and Lys-66. Asp-158 (proton acceptor) is an active-site residue. Residues 384 to 418 (PPSKSRLAKRRAQAHARKGGSHPTHSTVTASQGTP) form a disordered region. The span at 389-403 (RLAKRRAQAHARKGG) shows a compositional bias: basic residues. Polar residues predominate over residues 406 to 418 (PTHSTVTASQGTP).

Belongs to the protein kinase superfamily. CAMK Ser/Thr protein kinase family. Mg(2+) serves as cofactor.

The catalysed reaction is L-seryl-[protein] + ATP = O-phospho-L-seryl-[protein] + ADP + H(+). The enzyme catalyses L-threonyl-[protein] + ATP = O-phospho-L-threonyl-[protein] + ADP + H(+). Functionally, may play a role in the response to environmental stress and cytokines. Appears to regulate translation by phosphorylating EIF4E, thus increasing the affinity of this protein for the 7-methylguanosine-containing mRNA cap. The protein is MAP kinase-interacting serine/threonine-protein kinase 1 (mknk1) of Xenopus laevis (African clawed frog).